We begin with the raw amino-acid sequence, 547 residues long: Chaperonin GroEL (547 aa).

ATP-binding positions include 30–33 (TLGP), Lys51, 87–91 (DGTTT), Gly415, 480–482 (NAA), and Asp496.

Belongs to the chaperonin (HSP60) family. In terms of assembly, forms a cylinder of 14 subunits composed of two heptameric rings stacked back-to-back. Interacts with the co-chaperonin GroES.

The protein localises to the cytoplasm. The enzyme catalyses ATP + H2O + a folded polypeptide = ADP + phosphate + an unfolded polypeptide.. Functionally, together with its co-chaperonin GroES, plays an essential role in assisting protein folding. The GroEL-GroES system forms a nano-cage that allows encapsulation of the non-native substrate proteins and provides a physical environment optimized to promote and accelerate protein folding. The protein is Chaperonin GroEL of Glaesserella parasuis serovar 5 (strain SH0165) (Haemophilus parasuis).